Consider the following 164-residue polypeptide: Anthrone oxygenase AgnL2 (164 aa).

3 helical membrane-spanning segments follow: residues 11 to 31 (VVTG…AVPV), 48 to 70 (RMYH…LYAY), and 85 to 105 (VFAL…LCMV).

The protein belongs to the anthrone oxygenase family.

Its subcellular location is the membrane. The enzyme catalyses emodin anthrone + O2 = emodin + H2O + H(+). It functions in the pathway secondary metabolite biosynthesis. Its function is as follows. Anthrone oxygenase; part of the gene cluster that mediates the biosynthesis of agnestins, dihydroxy-xanthone metabolites. The pathway begins with the assembly and cyclization of atrochrysone thioester by the non-reducing polyketide synthase Agnpks1. The atrochrysone carboxyl ACP thioesterase AgnL7 then breaks the thioester bond and releases the atrochrysone carboxylic acid as the first enzyme-free intermediate. The decarboxylase AgnL1 then catalyzes the concerted decarboxylation-elimination required to convert atochrysone carboxylic acid into emodin anthrone, which is further oxidized to emodin by the anthrone oxygenase AgnL2. Emodin then undergoes reduction catalyzed by the oxidoreductase AgnL4 to yield the dihydroquinone tautomer which is the substrate for reduction by the short chain dehydrogenase AgnL6 reduction to produce hydroxyketone, followed by AgnL8 dehydration and likely spontaneous autoxidation to chrysophanol. Baeyer-Villiger oxidation by the oxidase AgnL3 leads to monodictyphenone via cleavage of the C-10/C-10a bond of chrysophanol. Alternative cleavage at the C-4a/C-10 bond of chrysophanol also leads to the formation some cephalone F. Further conversion to agnestins A and B, requires reduction to dihydro-monodictyphenone, oxidation to agnestin C probably via an epoxide, and rearrangement to either agnestin A or agnestin B directly, although agnestin A or agnestin B can also interconvert. Within the cluster, AgnR1 is the only unassigned oxidoreductase present which could be involved in this conversion. However, AgnR1 seems not to be involved in this step, and thus genes involved in the proposed oxidation/reduction may be located elsewhere on the genome. Further agnestin A derivatives are probably formed by spontaneous decarboxylations, dehydrations and methanolysis reactions. The protein is Anthrone oxygenase AgnL2 of Paecilomyces divaricatus (Penicillium divaricatum).